Reading from the N-terminus, the 59-residue chain is Large ribosomal subunit protein uL30 (59 aa).

It belongs to the universal ribosomal protein uL30 family. As to quaternary structure, part of the 50S ribosomal subunit.

The chain is Large ribosomal subunit protein uL30 from Psychrobacter cryohalolentis (strain ATCC BAA-1226 / DSM 17306 / VKM B-2378 / K5).